Reading from the N-terminus, the 234-residue chain is Protein SSP120 (234 aa).

An N-terminal signal peptide occupies residues 1–22 (MRFLRGFVFSLAFTLYKVTATA). 2 EF-hand domains span residues 52–87 (LKDYTPETFFALHDIKKKGFLDENDILSLYGLNREE) and 108–143 (MAKRVVSLIMRLLDVDDNTKITKEEYLQFAKRGNKF). At T212 the chain carries Phosphothreonine.

The chain is Protein SSP120 (SSP120) from Saccharomyces cerevisiae (strain ATCC 204508 / S288c) (Baker's yeast).